The primary structure comprises 308 residues: D-alanine--D-alanine ligase (308 aa).

In terms of domain architecture, ATP-grasp spans 103 to 302 (KTVMKTAGVP…FDELVQWMVE (200 aa)). 130-184 (MEPPYVIKPVADGSSVGVYIITEQHQHPPQELFRDDWAYGDKLLVEKYVAGKELT) is a binding site for ATP. Mg(2+) contacts are provided by Asp252, Glu269, and Asn271.

The protein belongs to the D-alanine--D-alanine ligase family. It depends on Mg(2+) as a cofactor. Mn(2+) serves as cofactor.

It localises to the cytoplasm. It catalyses the reaction 2 D-alanine + ATP = D-alanyl-D-alanine + ADP + phosphate + H(+). It participates in cell wall biogenesis; peptidoglycan biosynthesis. Its function is as follows. Cell wall formation. The chain is D-alanine--D-alanine ligase from Rhodopseudomonas palustris (strain BisA53).